We begin with the raw amino-acid sequence, 564 residues long: Proline--tRNA ligase (564 aa).

Belongs to the class-II aminoacyl-tRNA synthetase family. ProS type 1 subfamily. In terms of assembly, homodimer.

Its subcellular location is the cytoplasm. The catalysed reaction is tRNA(Pro) + L-proline + ATP = L-prolyl-tRNA(Pro) + AMP + diphosphate. In terms of biological role, catalyzes the attachment of proline to tRNA(Pro) in a two-step reaction: proline is first activated by ATP to form Pro-AMP and then transferred to the acceptor end of tRNA(Pro). As ProRS can inadvertently accommodate and process non-cognate amino acids such as alanine and cysteine, to avoid such errors it has two additional distinct editing activities against alanine. One activity is designated as 'pretransfer' editing and involves the tRNA(Pro)-independent hydrolysis of activated Ala-AMP. The other activity is designated 'posttransfer' editing and involves deacylation of mischarged Ala-tRNA(Pro). The misacylated Cys-tRNA(Pro) is not edited by ProRS. This chain is Proline--tRNA ligase, found in Coxiella burnetii (strain Dugway 5J108-111).